A 247-amino-acid polypeptide reads, in one-letter code: Probable membrane transporter protein y4hK (247 aa).

Transmembrane regions (helical) follow at residues 5–25, 31–51, 74–94, 121–141, 202–222, and 227–247; these read AIGL…VGQA, IAAM…ALAL, VYPF…VHLP, SALV…ITGA, FLPW…LIGS, and ASWL…KLLW.

This sequence belongs to the 4-toluene sulfonate uptake permease (TSUP) (TC 2.A.102) family.

The protein resides in the cell membrane. The sequence is that of Probable membrane transporter protein y4hK from Sinorhizobium fredii (strain NBRC 101917 / NGR234).